The chain runs to 179 residues: ATP synthase subunit delta (179 aa).

The protein belongs to the ATPase delta chain family. As to quaternary structure, F-type ATPases have 2 components, F(1) - the catalytic core - and F(0) - the membrane proton channel. F(1) has five subunits: alpha(3), beta(3), gamma(1), delta(1), epsilon(1). F(0) has three main subunits: a(1), b(2) and c(10-14). The alpha and beta chains form an alternating ring which encloses part of the gamma chain. F(1) is attached to F(0) by a central stalk formed by the gamma and epsilon chains, while a peripheral stalk is formed by the delta and b chains.

It is found in the cell membrane. Its function is as follows. F(1)F(0) ATP synthase produces ATP from ADP in the presence of a proton or sodium gradient. F-type ATPases consist of two structural domains, F(1) containing the extramembraneous catalytic core and F(0) containing the membrane proton channel, linked together by a central stalk and a peripheral stalk. During catalysis, ATP synthesis in the catalytic domain of F(1) is coupled via a rotary mechanism of the central stalk subunits to proton translocation. In terms of biological role, this protein is part of the stalk that links CF(0) to CF(1). It either transmits conformational changes from CF(0) to CF(1) or is implicated in proton conduction. The protein is ATP synthase subunit delta of Ureaplasma urealyticum serovar 10 (strain ATCC 33699 / Western).